Consider the following 860-residue polypeptide: Leucine--tRNA ligase (860 aa).

Positions 42–52 match the 'HIGH' region motif; sequence PYPSGRLHMGH. Positions 619–623 match the 'KMSKS' region motif; that stretch reads KMSKS. Lys-622 contributes to the ATP binding site.

The protein belongs to the class-I aminoacyl-tRNA synthetase family.

It is found in the cytoplasm. The enzyme catalyses tRNA(Leu) + L-leucine + ATP = L-leucyl-tRNA(Leu) + AMP + diphosphate. The protein is Leucine--tRNA ligase of Pectobacterium atrosepticum (strain SCRI 1043 / ATCC BAA-672) (Erwinia carotovora subsp. atroseptica).